The primary structure comprises 214 residues: Adenylate kinase (214 aa).

10 to 15 (GAGKGT) lines the ATP pocket. The interval 30-59 (STGDMLRAAIKAGTELGKQAKAVIDAGQLV) is NMP. Residues Thr31, Arg36, 57–59 (QLV), 85–88 (GFPR), and Gln92 each bind AMP. The interval 122-159 (GRRAHLPSGRTYHVVYNPPKVEGKDDVTGEDLVIREDD) is LID. ATP contacts are provided by residues Arg123 and 132–133 (TY). AMP contacts are provided by Arg156 and Arg167. An ATP-binding site is contributed by Lys200.

This sequence belongs to the adenylate kinase family. As to quaternary structure, monomer.

The protein localises to the cytoplasm. It catalyses the reaction AMP + ATP = 2 ADP. It functions in the pathway purine metabolism; AMP biosynthesis via salvage pathway; AMP from ADP: step 1/1. In terms of biological role, catalyzes the reversible transfer of the terminal phosphate group between ATP and AMP. Plays an important role in cellular energy homeostasis and in adenine nucleotide metabolism. The chain is Adenylate kinase from Vibrio cholerae serotype O1 (strain ATCC 39541 / Classical Ogawa 395 / O395).